Consider the following 452-residue polypeptide: Minor capsid protein (452 aa).

Composition is skewed to basic and acidic residues over residues 219–236 and 247–258; these read VDKP…KGKQ and GKPDISKPGEKQ. Positions 219–258 are disordered; it reads VDKPEDKPKPVFDDKGKQPTDTVPPVDNGKPDISKPGEKQ.

The protein belongs to the closteroviridae minor capsid protein family.

It is found in the virion. Functionally, minor capsid protein that encapsidates the 5'-terminal portion of the viral genome. The sequence is that of Minor capsid protein from Lettuce infectious yellows virus (isolate United States/92) (LIYV).